Here is a 184-residue protein sequence, read N- to C-terminus: GTP cyclohydrolase 1 (184 aa).

Cys-75, His-78, and Cys-146 together coordinate Zn(2+).

This sequence belongs to the GTP cyclohydrolase I family. Homomer.

The catalysed reaction is GTP + H2O = 7,8-dihydroneopterin 3'-triphosphate + formate + H(+). It functions in the pathway cofactor biosynthesis; 7,8-dihydroneopterin triphosphate biosynthesis; 7,8-dihydroneopterin triphosphate from GTP: step 1/1. The polypeptide is GTP cyclohydrolase 1 (Streptococcus pneumoniae (strain Hungary19A-6)).